The chain runs to 304 residues: Urease accessory protein UreD (304 aa).

Belongs to the UreD family. UreD, UreF and UreG form a complex that acts as a GTP-hydrolysis-dependent molecular chaperone, activating the urease apoprotein by helping to assemble the nickel containing metallocenter of UreC. The UreE protein probably delivers the nickel.

It is found in the cytoplasm. In terms of biological role, required for maturation of urease via the functional incorporation of the urease nickel metallocenter. This is Urease accessory protein UreD from Haloquadratum walsbyi (strain DSM 16790 / HBSQ001).